We begin with the raw amino-acid sequence, 237 residues long: Ribosomal RNA small subunit methyltransferase G (237 aa).

S-adenosyl-L-methionine-binding positions include G78, F83, 129 to 130, and R148; that span reads AE. Residues 218–237 form a disordered region; it reads KKETPNKYPRKAGMPNKRPL.

Belongs to the methyltransferase superfamily. RNA methyltransferase RsmG family.

It is found in the cytoplasm. Specifically methylates the N7 position of a guanine in 16S rRNA. This Streptococcus sanguinis (strain SK36) protein is Ribosomal RNA small subunit methyltransferase G.